Here is an 807-residue protein sequence, read N- to C-terminus: 1-phosphatidylinositol 4,5-bisphosphate phosphodiesterase delta-4 (807 aa).

Positions L16–D124 constitute a PH domain. The segment at K26–P53 is substrate binding. EF-hand domains follow at residues Q134–E169, M170–R205, and T203–E237. Residues D147, N149, D151, R153, E158, D183, S187, D189, and E194 each coordinate Ca(2+). The GBA motif lies at E213–D243. The PI-PLC X-box domain occupies Q290–K435. Residue H305 is part of the active site. Residues N306, E335, and D337 each contribute to the Ca(2+) site. Residue H350 is part of the active site. Residue E384 participates in Ca(2+) binding. Positions 433 and 435 each coordinate substrate. Residues V442–K490 are disordered. Residues D443 to D462 are compositionally biased toward acidic residues. Residues L470–A482 show a composition bias toward polar residues. The PI-PLC Y-box domain maps to L538 to R654. Substrate-binding residues include S567 and R594. The region spanning R654–S781 is the C2 domain. 4 residues coordinate Ca(2+): D697, N721, D750, and Y751. A PDZ-binding motif is present at residues H776 to L779.

As to quaternary structure, interacts with GRIP1. Interacts (via GBA motif) with guanine nucleotide-binding protein G(i) alpha subunit GNAI3 (inactive GDP-bound form)l low-affinity interaction. Requires Ca(2+) as cofactor.

It localises to the membrane. Its subcellular location is the nucleus. It is found in the cytoplasm. The protein localises to the endoplasmic reticulum. It catalyses the reaction a 1,2-diacyl-sn-glycero-3-phospho-(1D-myo-inositol-4,5-bisphosphate) + H2O = 1D-myo-inositol 1,4,5-trisphosphate + a 1,2-diacyl-sn-glycerol + H(+). It carries out the reaction a 1,2-diacyl-sn-glycero-3-phospho-(1D-myo-inositol) + H2O = 1D-myo-inositol 1-phosphate + a 1,2-diacyl-sn-glycerol + H(+). Hydrolyzes the phosphatidylinositol 4,5-bisphosphate (PIP2) to generate 2 second messenger molecules diacylglycerol (DAG) and inositol 1,4,5-trisphosphate (IP3). DAG mediates the activation of protein kinase C (PKC), while IP3 releases Ca(2+) from intracellular stores. Required for acrosome reaction in sperm during fertilization, probably by acting as an important enzyme for intracellular Ca(2+) mobilization in the zona pellucida-induced acrosome reaction. May play a role in cell growth. Modulates the liver regeneration in cooperation with nuclear PKC. Overexpression up-regulates the Erk signaling pathway and proliferation. This chain is 1-phosphatidylinositol 4,5-bisphosphate phosphodiesterase delta-4, found in Mus musculus (Mouse).